A 423-amino-acid polypeptide reads, in one-letter code: Testican-2 (423 aa).

A signal peptide spans 1–22 (MRAPGSGRLALPLLLLAVVALA). Ser72 is subject to Phosphoserine. 5 disulfides stabilise this stretch: Cys90–Cys101, Cys95–Cys111, Cys136–Cys166, Cys139–Cys159, and Cys148–Cys180. The 53-residue stretch at 130–182 (GGKDSVCKPCHMAQLASVCGSDGHTYSSVCKLEQQACLSSKQLAVRCEGPCPC) folds into the Kazal-like domain. Residue Asn225 is glycosylated (N-linked (GlcNAc...) asparagine). The 67-residue stretch at 309 to 375 (KPPCLAELER…GTRMHGTPDC (67 aa)) folds into the Thyroglobulin type-1 domain. 3 cysteine pairs are disulfide-bonded: Cys312–Cys336, Cys347–Cys354, and Cys356–Cys375. 2 O-linked (Xyl...) (glycosaminoglycan) serine glycosylation sites follow: Ser382 and Ser387. Residues 387-423 (SGVGWEDEEEKETEEAGEEAEEEEGEAGEADDGGYIW) form a disordered region. Residues 391–423 (WEDEEEKETEEAGEEAEEEEGEAGEADDGGYIW) show a composition bias toward acidic residues.

Post-translationally, O-glycosylated; contains chondroitin sulfate and heparan sulfate. Brain specific.

The protein resides in the secreted. The protein localises to the extracellular space. Its subcellular location is the extracellular matrix. Functionally, may participate in diverse steps of neurogenesis. Binds calcium. The chain is Testican-2 (Spock2) from Mus musculus (Mouse).